A 1783-amino-acid chain; its full sequence is uncharacterized protein (1783 aa).

A helical transmembrane segment spans residues 16–36; the sequence is FFLLFGIIFVLFSIIFLETSI. Low complexity predominate over residues 105-119; it reads GSDSGQSNGSGDNQN. The interval 105–125 is disordered; sequence GSDSGQSNGSGDNQNKTIPRK. 8 helical membrane passes run 917-937, 967-987, 1010-1030, 1084-1104, 1660-1680, 1709-1729, 1730-1750, and 1752-1772; these read VSTV…ILLI, VFAG…AFLL, WLSF…ISWI, LFTY…AGTI, FLLG…GISM, FIPA…GVLI, GIQA…FEFL, and YMVG…YFWI.

It belongs to the ABC-4 integral membrane protein family.

The protein localises to the cell membrane. This is an uncharacterized protein from Mycoplasma genitalium (strain ATCC 33530 / DSM 19775 / NCTC 10195 / G37) (Mycoplasmoides genitalium).